A 94-amino-acid chain; its full sequence is UPF0337 protein NE2439 (94 aa).

Positions 74–94 (KNVGEAVSSRQKSVKKRSLYT) are disordered. Residues 85-94 (KSVKKRSLYT) show a composition bias toward basic residues.

This sequence belongs to the UPF0337 (CsbD) family.

This chain is UPF0337 protein NE2439, found in Nitrosomonas europaea (strain ATCC 19718 / CIP 103999 / KCTC 2705 / NBRC 14298).